Here is a 355-residue protein sequence, read N- to C-terminus: Anthranilate phosphoribosyltransferase (355 aa).

5-phospho-alpha-D-ribose 1-diphosphate contacts are provided by residues Gly-102, 105–106, Ser-110, 112–115, 130–138, and Ser-142; these read GD, NIST, and KHGNRSVSS. Gly-102 serves as a coordination point for anthranilate. Ser-114 serves as a coordination point for Mg(2+). Asn-133 is a binding site for anthranilate. Arg-188 is an anthranilate binding site. Positions 246 and 247 each coordinate Mg(2+).

Belongs to the anthranilate phosphoribosyltransferase family. In terms of assembly, homodimer. Mg(2+) serves as cofactor.

It carries out the reaction N-(5-phospho-beta-D-ribosyl)anthranilate + diphosphate = 5-phospho-alpha-D-ribose 1-diphosphate + anthranilate. The protein operates within amino-acid biosynthesis; L-tryptophan biosynthesis; L-tryptophan from chorismate: step 2/5. Its function is as follows. Catalyzes the transfer of the phosphoribosyl group of 5-phosphorylribose-1-pyrophosphate (PRPP) to anthranilate to yield N-(5'-phosphoribosyl)-anthranilate (PRA). The sequence is that of Anthranilate phosphoribosyltransferase from Pectobacterium carotovorum subsp. carotovorum (strain PC1).